Consider the following 241-residue polypeptide: ATP synthase subunit a (241 aa).

5 consecutive transmembrane segments (helical) span residues glycine 30–glycine 50, phenylalanine 91–tryptophan 111, isoleucine 128–serine 148, leucine 193–leucine 213, and glycine 214–glycine 234.

This sequence belongs to the ATPase A chain family. F-type ATPases have 2 components, CF(1) - the catalytic core - and CF(0) - the membrane proton channel. CF(1) has five subunits: alpha(3), beta(3), gamma(1), delta(1), epsilon(1). CF(0) has four main subunits: a, b, b' and c.

The protein localises to the cellular thylakoid membrane. Its function is as follows. Key component of the proton channel; it plays a direct role in the translocation of protons across the membrane. This chain is ATP synthase subunit a, found in Prochlorococcus marinus (strain AS9601).